A 355-amino-acid polypeptide reads, in one-letter code: UDP-N-acetylglucosamine--N-acetylmuramyl-(pentapeptide) pyrophosphoryl-undecaprenol N-acetylglucosamine transferase (355 aa).

Residues 15–17 (TGG), Asn127, Arg163, Ser191, Ile244, 263–268 (ALTVSE), and Gln288 each bind UDP-N-acetyl-alpha-D-glucosamine.

Belongs to the glycosyltransferase 28 family. MurG subfamily.

It is found in the cell inner membrane. The catalysed reaction is di-trans,octa-cis-undecaprenyl diphospho-N-acetyl-alpha-D-muramoyl-L-alanyl-D-glutamyl-meso-2,6-diaminopimeloyl-D-alanyl-D-alanine + UDP-N-acetyl-alpha-D-glucosamine = di-trans,octa-cis-undecaprenyl diphospho-[N-acetyl-alpha-D-glucosaminyl-(1-&gt;4)]-N-acetyl-alpha-D-muramoyl-L-alanyl-D-glutamyl-meso-2,6-diaminopimeloyl-D-alanyl-D-alanine + UDP + H(+). It participates in cell wall biogenesis; peptidoglycan biosynthesis. In terms of biological role, cell wall formation. Catalyzes the transfer of a GlcNAc subunit on undecaprenyl-pyrophosphoryl-MurNAc-pentapeptide (lipid intermediate I) to form undecaprenyl-pyrophosphoryl-MurNAc-(pentapeptide)GlcNAc (lipid intermediate II). This Escherichia coli O127:H6 (strain E2348/69 / EPEC) protein is UDP-N-acetylglucosamine--N-acetylmuramyl-(pentapeptide) pyrophosphoryl-undecaprenol N-acetylglucosamine transferase.